An 881-amino-acid polypeptide reads, in one-letter code: Glutamate--tRNA ligase (881 aa).

Residues 1–480 are glutamyl-tRNA synthetase; the sequence is MSVRVRLAPS…ILRFKKSIGQ (480 aa). Positions 9-19 match the 'HIGH' region motif; that stretch reads PSPTGNLHIGT. Residues 248-252 carry the 'KMSKS' region motif; it reads KLSKR. Lysine 251 contributes to the ATP binding site. The unknown stretch occupies residues 481-881; it reads EIEDTKIEDT…IKREIFGKPS (401 aa). The span at 488–502 shows a compositional bias: basic and acidic residues; the sequence is EDTKKAETTPHKSKG. The disordered stretch occupies residues 488 to 747; sequence EDTKKAETTP…PTATDAETRE (260 aa). The segment covering 522 to 548 has biased composition (low complexity); that stretch reads QTQTTKPPKKGQTATPVATTPTATDVT. Residues 549–562 show a composition bias toward polar residues; sequence ENTSVGTQETQSQI. Low complexity predominate over residues 563–576; that stretch reads TTPVATTPTATDVT. Polar residues predominate over residues 577 to 590; sequence ENTSVGTQETQSQI. Low complexity predominate over residues 591–604; it reads TTPVATTPTATDVT. The segment covering 605–618 has biased composition (polar residues); that stretch reads ENTSVETQETQSQI. A compositionally biased stretch (low complexity) spans 619-632; sequence TTPVATTPTATDVT. The segment covering 633–646 has biased composition (polar residues); sequence ENTSVETQETQSQI. The segment covering 647–660 has biased composition (low complexity); sequence TTPVATTPTATDVT. Positions 661-674 are enriched in polar residues; that stretch reads ENTSVGTQETQSQI. Low complexity predominate over residues 675–688; sequence TTPVATTPTATDVT. Residues 689 to 702 show a composition bias toward polar residues; sequence ENTSVETQETQSQI. Low complexity predominate over residues 703–720; that stretch reads TTPVATTSTATDVTENTS. Residues 721 to 730 show a composition bias toward polar residues; that stretch reads VETQETQSQI. Positions 731–742 are enriched in low complexity; sequence TTPVATTPTATD. Helical transmembrane passes span 809–829 and 832–852; these read LFGW…VIEA and GIPI…VWFV.

The protein belongs to the class-I aminoacyl-tRNA synthetase family. Glutamate--tRNA ligase type 1 subfamily. In terms of assembly, monomer.

The protein localises to the cytoplasm. Its subcellular location is the cell membrane. The catalysed reaction is tRNA(Glu) + L-glutamate + ATP = L-glutamyl-tRNA(Glu) + AMP + diphosphate. Functionally, catalyzes the attachment of glutamate to tRNA(Glu) in a two-step reaction: glutamate is first activated by ATP to form Glu-AMP and then transferred to the acceptor end of tRNA(Glu). This is Glutamate--tRNA ligase (gltX) from Trichodesmium erythraeum (strain IMS101).